The following is a 568-amino-acid chain: Proline--tRNA ligase (568 aa).

The protein belongs to the class-II aminoacyl-tRNA synthetase family. ProS type 1 subfamily. Homodimer.

The protein localises to the cytoplasm. The catalysed reaction is tRNA(Pro) + L-proline + ATP = L-prolyl-tRNA(Pro) + AMP + diphosphate. Functionally, catalyzes the attachment of proline to tRNA(Pro) in a two-step reaction: proline is first activated by ATP to form Pro-AMP and then transferred to the acceptor end of tRNA(Pro). As ProRS can inadvertently accommodate and process non-cognate amino acids such as alanine and cysteine, to avoid such errors it has two additional distinct editing activities against alanine. One activity is designated as 'pretransfer' editing and involves the tRNA(Pro)-independent hydrolysis of activated Ala-AMP. The other activity is designated 'posttransfer' editing and involves deacylation of mischarged Ala-tRNA(Pro). The misacylated Cys-tRNA(Pro) is not edited by ProRS. The sequence is that of Proline--tRNA ligase from Macrococcus caseolyticus (strain JCSC5402) (Macrococcoides caseolyticum).